The sequence spans 295 residues: 4-diphosphocytidyl-2-C-methyl-D-erythritol kinase (295 aa).

K10 is an active-site residue. 97–107 (PIGSGLGGASS) is an ATP binding site. D139 is a catalytic residue.

It belongs to the GHMP kinase family. IspE subfamily. In terms of assembly, homodimer.

It catalyses the reaction 4-CDP-2-C-methyl-D-erythritol + ATP = 4-CDP-2-C-methyl-D-erythritol 2-phosphate + ADP + H(+). It functions in the pathway isoprenoid biosynthesis; isopentenyl diphosphate biosynthesis via DXP pathway; isopentenyl diphosphate from 1-deoxy-D-xylulose 5-phosphate: step 3/6. Functionally, catalyzes the phosphorylation of the position 2 hydroxy group of 4-diphosphocytidyl-2C-methyl-D-erythritol. The chain is 4-diphosphocytidyl-2-C-methyl-D-erythritol kinase from Blochmanniella pennsylvanica (strain BPEN).